The sequence spans 466 residues: UDP-N-acetylmuramoylalanine--D-glutamate ligase (466 aa).

Residue 128–134 coordinates ATP; that stretch reads GTNGKST.

Belongs to the MurCDEF family.

The protein resides in the cytoplasm. The enzyme catalyses UDP-N-acetyl-alpha-D-muramoyl-L-alanine + D-glutamate + ATP = UDP-N-acetyl-alpha-D-muramoyl-L-alanyl-D-glutamate + ADP + phosphate + H(+). Its pathway is cell wall biogenesis; peptidoglycan biosynthesis. Cell wall formation. Catalyzes the addition of glutamate to the nucleotide precursor UDP-N-acetylmuramoyl-L-alanine (UMA). The polypeptide is UDP-N-acetylmuramoylalanine--D-glutamate ligase (Bartonella henselae (strain ATCC 49882 / DSM 28221 / CCUG 30454 / Houston 1) (Rochalimaea henselae)).